The following is a 90-amino-acid chain: Transcriptional repressor SdpR (90 aa).

In terms of domain architecture, HTH arsR-type spans 1 to 87; it reads MNNVFKAISD…WMLNFINKGD (87 aa). A DNA-binding region (H-T-H motif) is located at residues 39–62; sequence PSISHHLNILKQAEVISDHRKGQF.

Its subcellular location is the cytoplasm. Represses the transcription of the sdpIR operon and of several other operons that probably contribute to delaying commitment to sporulation. The chain is Transcriptional repressor SdpR (sdpR) from Bacillus subtilis (strain 168).